The primary structure comprises 241 residues: 3-oxoacyl-[acyl-carrier-protein] reductase FabG (241 aa).

NADP(+)-binding positions include 13–16, serine 38, 57–58, and asparagine 83; these read GASS and EV. Serine 135 contributes to the substrate binding site. Tyrosine 148 acts as the Proton acceptor in catalysis. NADP(+) contacts are provided by residues 148–152 and isoleucine 181; that span reads YCASK.

It belongs to the short-chain dehydrogenases/reductases (SDR) family. In terms of assembly, homotetramer.

The catalysed reaction is a (3R)-hydroxyacyl-[ACP] + NADP(+) = a 3-oxoacyl-[ACP] + NADPH + H(+). It functions in the pathway lipid metabolism; fatty acid biosynthesis. In terms of biological role, catalyzes the NADPH-dependent reduction of beta-ketoacyl-ACP substrates to beta-hydroxyacyl-ACP products, the first reductive step in the elongation cycle of fatty acid biosynthesis. The polypeptide is 3-oxoacyl-[acyl-carrier-protein] reductase FabG (fabG) (Rickettsia prowazekii (strain Madrid E)).